A 406-amino-acid polypeptide reads, in one-letter code: chitinase-like effector (406 aa).

A signal peptide spans 1–23 (MLTLLPSLILLLSTLSLSTPANA). Residues 26–405 (AIAKAYYPGW…DAVRHGAGFK (380 aa)) enclose the GH18 domain. Residues Tyr138 and Trp384 each coordinate chitin.

It belongs to the glycosyl hydrolase 18 family.

The protein resides in the secreted. Catalytically impaired chitinase that binds efficiently to chitin, but not to chitosan, xylan, or cellulose. Despite the lack of chitinolytic activity, retains substrate binding specificity and acts as an effector to prevent chitin-triggered immunity by sequestering immunogenic chitin fragments. The protein is chitinase-like effector (Chi) of Moniliophthora roreri (Frosty pod rot fungus).